The following is a 310-amino-acid chain: Methionyl-tRNA formyltransferase (310 aa).

Residue 110 to 113 participates in (6S)-5,6,7,8-tetrahydrofolate binding; sequence SLLP.

Belongs to the Fmt family.

The catalysed reaction is L-methionyl-tRNA(fMet) + (6R)-10-formyltetrahydrofolate = N-formyl-L-methionyl-tRNA(fMet) + (6S)-5,6,7,8-tetrahydrofolate + H(+). Functionally, attaches a formyl group to the free amino group of methionyl-tRNA(fMet). The formyl group appears to play a dual role in the initiator identity of N-formylmethionyl-tRNA by promoting its recognition by IF2 and preventing the misappropriation of this tRNA by the elongation apparatus. This Clostridium tetani (strain Massachusetts / E88) protein is Methionyl-tRNA formyltransferase.